Consider the following 132-residue polypeptide: Fluoride-specific ion channel FluC 2 (132 aa).

4 consecutive transmembrane segments (helical) span residues 5 to 25, 34 to 54, 59 to 79, and 95 to 115; these read VAVF…NLLG, TFIE…FFAA, PLVQ…MSAF, and VLYL…GIVI. Glycine 71 and threonine 74 together coordinate Na(+).

This sequence belongs to the fluoride channel Fluc/FEX (TC 1.A.43) family.

It localises to the cell membrane. The catalysed reaction is fluoride(in) = fluoride(out). With respect to regulation, na(+) is not transported, but it plays an essential structural role and its presence is essential for fluoride channel function. Functionally, fluoride-specific ion channel. Important for reducing fluoride concentration in the cell, thus reducing its toxicity. This is Fluoride-specific ion channel FluC 2 from Bacillus licheniformis (strain ATCC 14580 / DSM 13 / JCM 2505 / CCUG 7422 / NBRC 12200 / NCIMB 9375 / NCTC 10341 / NRRL NRS-1264 / Gibson 46).